We begin with the raw amino-acid sequence, 467 residues long: Flagellum-specific ATP synthase (467 aa).

Residue 180–187 (AGSGVGKS) participates in ATP binding.

This sequence belongs to the ATPase alpha/beta chains family.

It localises to the cytoplasm. It catalyses the reaction ATP + H2O + 4 H(+)(in) = ADP + phosphate + 5 H(+)(out). Functionally, probable catalytic subunit of a protein translocase for flagellum-specific export, or a proton translocase involved in local circuits at the flagellum. This Rhizobium meliloti (strain 1021) (Ensifer meliloti) protein is Flagellum-specific ATP synthase (fliI).